Reading from the N-terminus, the 228-residue chain is Phosphoribosylformylglycinamidine synthase subunit PurQ (228 aa).

In terms of domain architecture, Glutamine amidotransferase type-1 spans 2 to 228 (TVVVVQFGGS…DGKGILQAFG (227 aa)). Catalysis depends on Cys-88, which acts as the Nucleophile. Active-site residues include His-205 and Glu-207.

Part of the FGAM synthase complex composed of 1 PurL, 1 PurQ and 2 PurS subunits.

The protein resides in the cytoplasm. It catalyses the reaction N(2)-formyl-N(1)-(5-phospho-beta-D-ribosyl)glycinamide + L-glutamine + ATP + H2O = 2-formamido-N(1)-(5-O-phospho-beta-D-ribosyl)acetamidine + L-glutamate + ADP + phosphate + H(+). The catalysed reaction is L-glutamine + H2O = L-glutamate + NH4(+). Its pathway is purine metabolism; IMP biosynthesis via de novo pathway; 5-amino-1-(5-phospho-D-ribosyl)imidazole from N(2)-formyl-N(1)-(5-phospho-D-ribosyl)glycinamide: step 1/2. In terms of biological role, part of the phosphoribosylformylglycinamidine synthase complex involved in the purines biosynthetic pathway. Catalyzes the ATP-dependent conversion of formylglycinamide ribonucleotide (FGAR) and glutamine to yield formylglycinamidine ribonucleotide (FGAM) and glutamate. The FGAM synthase complex is composed of three subunits. PurQ produces an ammonia molecule by converting glutamine to glutamate. PurL transfers the ammonia molecule to FGAR to form FGAM in an ATP-dependent manner. PurS interacts with PurQ and PurL and is thought to assist in the transfer of the ammonia molecule from PurQ to PurL. The protein is Phosphoribosylformylglycinamidine synthase subunit PurQ of Haloquadratum walsbyi (strain DSM 16790 / HBSQ001).